The sequence spans 257 residues: NAD kinase (257 aa).

Catalysis depends on Asp-44, which acts as the Proton acceptor. NAD(+) is bound by residues 44–45 (DG), Arg-49, 116–117 (NE), Asp-146, Ala-154, and 157–162 (TAYNLS).

Belongs to the NAD kinase family. A divalent metal cation is required as a cofactor.

Its subcellular location is the cytoplasm. It catalyses the reaction NAD(+) + ATP = ADP + NADP(+) + H(+). In terms of biological role, involved in the regulation of the intracellular balance of NAD and NADP, and is a key enzyme in the biosynthesis of NADP. Catalyzes specifically the phosphorylation on 2'-hydroxyl of the adenosine moiety of NAD to yield NADP. This Rhizorhabdus wittichii (strain DSM 6014 / CCUG 31198 / JCM 15750 / NBRC 105917 / EY 4224 / RW1) (Sphingomonas wittichii) protein is NAD kinase.